Consider the following 766-residue polypeptide: Lanosterol synthase ERG7 (766 aa).

The disordered stretch occupies residues 1–47 (MVANSTGRDASALKSRKRAADSESEPLLKQGQPFPKQPRIGSELDKT). Residues 148-190 (ATAIYNYISARAHPEDGGWGLHIEGESSVFGTLMNYVALRLVG) form a PFTB 1 repeat. Residue aspartate 482 is the Proton donor of the active site. PFTB repeat units follow at residues 586–626 (IRTA…KHIG) and 635–676 (SRRG…VVQT).

This sequence belongs to the terpene cyclase/mutase family.

Its subcellular location is the lipid droplet. It is found in the endoplasmic reticulum membrane. The catalysed reaction is (S)-2,3-epoxysqualene = lanosterol. It functions in the pathway terpene metabolism; lanosterol biosynthesis; lanosterol from farnesyl diphosphate: step 3/3. The protein operates within steroid metabolism; ergosterol biosynthesis. In terms of biological role, lanosterol synthase; part of the third module of ergosterol biosynthesis pathway that includes the late steps of the pathway. ERG7 catalyzes the cyclization of (S)-2,3 oxidosqualene to lanosterol, a reaction that forms the sterol core. The third module or late pathway involves the ergosterol synthesis itself through consecutive reactions that mainly occur in the endoplasmic reticulum (ER) membrane. Firstly, the squalene synthase ERG9 catalyzes the condensation of 2 farnesyl pyrophosphate moieties to form squalene, which is the precursor of all steroids. Squalene synthase is crucial for balancing the incorporation of farnesyl diphosphate (FPP) into sterol and nonsterol isoprene synthesis. Secondly, squalene is converted into lanosterol by the consecutive action of the squalene epoxidase ERG1 and the lanosterol synthase ERG7. Then, the delta(24)-sterol C-methyltransferase ERG6 methylates lanosterol at C-24 to produce eburicol. Eburicol is the substrate of the sterol 14-alpha demethylase encoded by CYP51A, CYP51B and CYP51C, to yield 4,4,24-trimethyl ergosta-8,14,24(28)-trienol. CYP51B encodes the enzyme primarily responsible for sterol 14-alpha-demethylation, and plays an essential role in ascospore formation. CYP51A encodes an additional sterol 14-alpha-demethylase, induced on ergosterol depletion and responsible for the intrinsic variation in azole sensitivity. The third CYP51 isoform, CYP51C, does not encode a sterol 14-alpha-demethylase, but is required for full virulence on host wheat ears. The C-14 reductase ERG24 then reduces the C14=C15 double bond which leads to 4,4-dimethylfecosterol. A sequence of further demethylations at C-4, involving the C-4 demethylation complex containing the C-4 methylsterol oxidases ERG25, the sterol-4-alpha-carboxylate 3-dehydrogenase ERG26 and the 3-keto-steroid reductase ERG27, leads to the production of fecosterol via 4-methylfecosterol. ERG28 has a role as a scaffold to help anchor ERG25, ERG26 and ERG27 to the endoplasmic reticulum. The C-8 sterol isomerase ERG2 then catalyzes the reaction which results in unsaturation at C-7 in the B ring of sterols and thus converts fecosterol to episterol. The sterol-C5-desaturases ERG3A and ERG3BB then catalyze the introduction of a C-5 double bond in the B ring to produce 5-dehydroepisterol. The C-22 sterol desaturases ERG5A and ERG5B further convert 5-dehydroepisterol into ergosta-5,7,22,24(28)-tetraen-3beta-ol by forming the C-22(23) double bond in the sterol side chain. Finally, ergosta-5,7,22,24(28)-tetraen-3beta-ol is substrate of the C-24(28) sterol reductase ERG4 to produce ergosterol. This Gibberella zeae (strain ATCC MYA-4620 / CBS 123657 / FGSC 9075 / NRRL 31084 / PH-1) (Wheat head blight fungus) protein is Lanosterol synthase ERG7.